The primary structure comprises 183 residues: Endoribonuclease YbeY (183 aa).

Residues His140, His144, and His150 each contribute to the Zn(2+) site.

The protein belongs to the endoribonuclease YbeY family. The cofactor is Zn(2+).

It localises to the cytoplasm. Functionally, single strand-specific metallo-endoribonuclease involved in late-stage 70S ribosome quality control and in maturation of the 3' terminus of the 16S rRNA. The protein is Endoribonuclease YbeY of Bradyrhizobium diazoefficiens (strain JCM 10833 / BCRC 13528 / IAM 13628 / NBRC 14792 / USDA 110).